A 341-amino-acid polypeptide reads, in one-letter code: Putative methyltransferase YGR283C (341 aa).

It belongs to the class IV-like SAM-binding methyltransferase superfamily.

Its subcellular location is the nucleus. It localises to the nucleolus. This Saccharomyces cerevisiae (strain ATCC 204508 / S288c) (Baker's yeast) protein is Putative methyltransferase YGR283C.